Here is a 242-residue protein sequence, read N- to C-terminus: Protein HTATIP2 (242 aa).

Ala-2 bears the N-acetylalanine mark. A required for interaction with elongation factor EEF1A1 region spans residues 2 to 25; it reads AETEALSKLREDFRMQNKSVFILG. NADPH-binding residues include Ser-27, Gly-28, Glu-29, Thr-30, Arg-52, Arg-53, Leu-92, Gly-93, Tyr-143, Lys-147, Leu-170, and Arg-178. Tyr-143 functions as the Proton acceptor in the catalytic mechanism. The active site involves Lys-147.

As to quaternary structure, monomer. Forms homodimers during oxidative stress. Interacts (via N-terminus) with elongation factor EEF1A1 (via middle-region); the interaction is direct and competes with EEF1A1 binding to guanyl-nucleotide exchange factor EEF1B2, thereby inhibiting GDP for GTP exchange and reactivation of EEF1A1. Interacts with nuclear transport receptors XPO4, IPO5/RANBP5, IPO7, IPO9 and KPNB1 as well as GCN1L1/GCN1 and LRPPRC probably through their HEAT repeats. Binds NCOA5/CIA.

The protein resides in the cytoplasm. Its function is as follows. Represses translation by preventing reactivation of elongation factor eEF1A. May also inhibit nuclear import by competing with nuclear import substrates for binding to a subset of nuclear transport receptors. Has additionally been proposed to act as a redox sensor involved in cellular oxidative stress surveillance. The protein is Protein HTATIP2 (HTATIP2) of Gorilla gorilla gorilla (Western lowland gorilla).